We begin with the raw amino-acid sequence, 574 residues long: Adenine deaminase (574 aa).

It belongs to the metallo-dependent hydrolases superfamily. Adenine deaminase family. It depends on Mn(2+) as a cofactor.

It carries out the reaction adenine + H2O + H(+) = hypoxanthine + NH4(+). The chain is Adenine deaminase from Thermosipho africanus (strain TCF52B).